A 235-amino-acid chain; its full sequence is Chromosome partition protein MukE (235 aa).

The interval 204–235 (QQEPSQSSLLDGFDADDTGHHDSELTMQEGEV) is disordered.

The protein belongs to the MukE family. As to quaternary structure, interacts, and probably forms a ternary complex, with MukF and MukB. The complex formation is stimulated by calcium or magnesium.

The protein resides in the cytoplasm. It localises to the nucleoid. In terms of biological role, involved in chromosome condensation, segregation and cell cycle progression. May participate in facilitating chromosome segregation by condensation DNA from both sides of a centrally located replisome during cell division. Probably acts via its interaction with MukB and MukF. The protein is Chromosome partition protein MukE of Photobacterium profundum (strain SS9).